Consider the following 125-residue polypeptide: Translation initiation factor 5A (125 aa).

Lys35 is modified (hypusine).

This sequence belongs to the eIF-5A family.

It is found in the cytoplasm. Functionally, functions by promoting the formation of the first peptide bond. The chain is Translation initiation factor 5A (eIF5A) from Methanoculleus marisnigri (strain ATCC 35101 / DSM 1498 / JR1).